A 734-amino-acid polypeptide reads, in one-letter code: Ribosomal RNA large subunit methyltransferase K/L (734 aa).

The THUMP domain occupies 49 to 167 (HAYRICMWSR…KTEHTYCLDL (119 aa)).

Belongs to the methyltransferase superfamily. RlmKL family.

Its subcellular location is the cytoplasm. It carries out the reaction guanosine(2445) in 23S rRNA + S-adenosyl-L-methionine = N(2)-methylguanosine(2445) in 23S rRNA + S-adenosyl-L-homocysteine + H(+). The catalysed reaction is guanosine(2069) in 23S rRNA + S-adenosyl-L-methionine = N(2)-methylguanosine(2069) in 23S rRNA + S-adenosyl-L-homocysteine + H(+). Functionally, specifically methylates the guanine in position 2445 (m2G2445) and the guanine in position 2069 (m7G2069) of 23S rRNA. This Acinetobacter baumannii (strain ACICU) protein is Ribosomal RNA large subunit methyltransferase K/L.